A 537-amino-acid polypeptide reads, in one-letter code: ESX-2 secretion system protein EccE2 (537 aa).

Residues 31–51 (ALGGQLGAVMAVVVGVALVFV) traverse the membrane as a helical segment.

This sequence belongs to the EccE family. In terms of assembly, could be part of the ESX-2 / type VII secretion system (T7SS), which is composed of cytosolic and membrane components.

It localises to the cell membrane. The sequence is that of ESX-2 secretion system protein EccE2 (eccE2) from Mycobacterium tuberculosis (strain CDC 1551 / Oshkosh).